A 443-amino-acid chain; its full sequence is Xaa-Pro dipeptidase (443 aa).

5 residues coordinate Mn(2+): Asp-244, Asp-255, His-336, Glu-381, and Glu-420.

The protein belongs to the peptidase M24B family. Bacterial-type prolidase subfamily. The cofactor is Mn(2+).

It carries out the reaction Xaa-L-Pro dipeptide + H2O = an L-alpha-amino acid + L-proline. Functionally, splits dipeptides with a prolyl residue in the C-terminal position. This chain is Xaa-Pro dipeptidase, found in Stenotrophomonas maltophilia (strain K279a).